The chain runs to 522 residues: Putative ribose/galactose/methyl galactoside import ATP-binding protein (522 aa).

2 ABC transporter domains span residues 7–244 (LEMV…VGRE) and 254–498 (PKLG…TGQA). 39-46 (GENGAGKS) contacts ATP.

Belongs to the ABC transporter superfamily. Carbohydrate importer 2 (CUT2) (TC 3.A.1.2) family.

Its subcellular location is the cell membrane. It catalyses the reaction D-ribose(out) + ATP + H2O = D-ribose(in) + ADP + phosphate + H(+). The enzyme catalyses D-galactose(out) + ATP + H2O = D-galactose(in) + ADP + phosphate + H(+). Its function is as follows. Part of an ABC transporter complex involved in carbohydrate import. Could be involved in ribose, galactose and/or methyl galactoside import. Responsible for energy coupling to the transport system. The protein is Putative ribose/galactose/methyl galactoside import ATP-binding protein of Halalkalibacterium halodurans (strain ATCC BAA-125 / DSM 18197 / FERM 7344 / JCM 9153 / C-125) (Bacillus halodurans).